The chain runs to 249 residues: Phosphoribosylaminoimidazole-succinocarboxamide synthase (249 aa).

This sequence belongs to the SAICAR synthetase family.

The enzyme catalyses 5-amino-1-(5-phospho-D-ribosyl)imidazole-4-carboxylate + L-aspartate + ATP = (2S)-2-[5-amino-1-(5-phospho-beta-D-ribosyl)imidazole-4-carboxamido]succinate + ADP + phosphate + 2 H(+). It functions in the pathway purine metabolism; IMP biosynthesis via de novo pathway; 5-amino-1-(5-phospho-D-ribosyl)imidazole-4-carboxamide from 5-amino-1-(5-phospho-D-ribosyl)imidazole-4-carboxylate: step 1/2. This chain is Phosphoribosylaminoimidazole-succinocarboxamide synthase, found in Chloroflexus aurantiacus (strain ATCC 29366 / DSM 635 / J-10-fl).